The primary structure comprises 136 residues: Frataxin, mitochondrial (136 aa).

The protein belongs to the frataxin family. In terms of assembly, monomer. Oligomer.

The protein resides in the mitochondrion. The enzyme catalyses 4 Fe(2+) + O2 + 4 H(+) = 4 Fe(3+) + 2 H2O. Its function is as follows. Promotes the biosynthesis of heme as well as the assembly and repair of iron-sulfur clusters by delivering Fe(2+) to proteins involved in these pathways. May play a role in the protection against iron-catalyzed oxidative stress through its ability to catalyze the oxidation of Fe(2+) to Fe(3+). May be able to store large amounts of the metal in the form of a ferrihydrite mineral by oligomerization. This is Frataxin, mitochondrial (frh-1) from Caenorhabditis elegans.